A 157-amino-acid chain; its full sequence is 6,7-dimethyl-8-ribityllumazine synthase (157 aa).

5-amino-6-(D-ribitylamino)uracil is bound by residues W27, 59 to 61, and 81 to 83; these read AIE and VVI. (2S)-2-hydroxy-3-oxobutyl phosphate is bound at residue 86-87; the sequence is ET. H89 functions as the Proton donor in the catalytic mechanism. N114 contacts 5-amino-6-(D-ribitylamino)uracil. R128 is a (2S)-2-hydroxy-3-oxobutyl phosphate binding site.

It belongs to the DMRL synthase family. In terms of assembly, homopentamer.

The enzyme catalyses (2S)-2-hydroxy-3-oxobutyl phosphate + 5-amino-6-(D-ribitylamino)uracil = 6,7-dimethyl-8-(1-D-ribityl)lumazine + phosphate + 2 H2O + H(+). Its pathway is cofactor biosynthesis; riboflavin biosynthesis; riboflavin from 2-hydroxy-3-oxobutyl phosphate and 5-amino-6-(D-ribitylamino)uracil: step 1/2. In terms of biological role, catalyzes the formation of 6,7-dimethyl-8-ribityllumazine by condensation of 5-amino-6-(D-ribitylamino)uracil with 3,4-dihydroxy-2-butanone 4-phosphate. This is the penultimate step in the biosynthesis of riboflavin. This is 6,7-dimethyl-8-ribityllumazine synthase from Mycolicibacterium vanbaalenii (strain DSM 7251 / JCM 13017 / BCRC 16820 / KCTC 9966 / NRRL B-24157 / PYR-1) (Mycobacterium vanbaalenii).